The primary structure comprises 305 residues: Acetylglutamate kinase (305 aa).

Substrate contacts are provided by residues 80-81 (GG), Arg-102, and Asn-196.

It belongs to the acetylglutamate kinase family. ArgB subfamily.

It is found in the cytoplasm. It carries out the reaction N-acetyl-L-glutamate + ATP = N-acetyl-L-glutamyl 5-phosphate + ADP. It functions in the pathway amino-acid biosynthesis; L-arginine biosynthesis; N(2)-acetyl-L-ornithine from L-glutamate: step 2/4. Catalyzes the ATP-dependent phosphorylation of N-acetyl-L-glutamate. The sequence is that of Acetylglutamate kinase from Chlorobium luteolum (strain DSM 273 / BCRC 81028 / 2530) (Pelodictyon luteolum).